The following is a 285-amino-acid chain: ATP phosphoribosyltransferase (285 aa).

The protein belongs to the ATP phosphoribosyltransferase family. Long subfamily. It depends on Mg(2+) as a cofactor.

Its subcellular location is the cytoplasm. It catalyses the reaction 1-(5-phospho-beta-D-ribosyl)-ATP + diphosphate = 5-phospho-alpha-D-ribose 1-diphosphate + ATP. The protein operates within amino-acid biosynthesis; L-histidine biosynthesis; L-histidine from 5-phospho-alpha-D-ribose 1-diphosphate: step 1/9. With respect to regulation, feedback inhibited by histidine. Its function is as follows. Catalyzes the condensation of ATP and 5-phosphoribose 1-diphosphate to form N'-(5'-phosphoribosyl)-ATP (PR-ATP). Has a crucial role in the pathway because the rate of histidine biosynthesis seems to be controlled primarily by regulation of HisG enzymatic activity. The polypeptide is ATP phosphoribosyltransferase (Streptomyces coelicolor (strain ATCC BAA-471 / A3(2) / M145)).